The following is a 288-amino-acid chain: MWLEGSPLAVLAAVSFLLSVLAAAQGSGEYCHGWLDAQAVWRDGFQCPERFDGDDSTICCGKCELRYCCSSAEARLDQGVCNNDRQQGAPDHNRPDKDSPDSTAVPIYVPFLIVGSVFVAFIIVGSLVAICCCRCLRPKQEPQQSRAPGSNRLMETIPMISSASTSRGSSSRQSSTAASSSSSANSGARPPPTRSQTNCCLPEGAMNNVYVNMPTNFSVLNCQQATQLVQHQGQYLHPQFVGYAVPHDSVPMTPVPQFIDGLQGGYRQMQSPYPHSNPEQMMYPAVTV.

Positions 1 to 23 (MWLEGSPLAVLAAVSFLLSVLAA) are cleaved as a signal peptide. Residues 24–110 (AQGSGEYCHG…DSTAVPIYVP (87 aa)) are Extracellular-facing. The helical transmembrane segment at 111–131 (FLIVGSVFVAFIIVGSLVAIC) threads the bilayer. Over 132–288 (CCRCLRPKQE…EQMMYPAVTV (157 aa)) the chain is Cytoplasmic. Residues 161-188 (SSASTSRGSSSRQSSTAASSSSSANSGA) are compositionally biased toward low complexity. The tract at residues 161–198 (SSASTSRGSSSRQSSTAASSSSSANSGARPPPTRSQTN) is disordered.

Belongs to the shisa family. In terms of assembly, interacts with fzd8 and fgfr1.

It is found in the endoplasmic reticulum membrane. In terms of biological role, plays an essential role in the maturation of presomitic mesoderm cells by individual attenuation of both fgf and wnt signaling. Inhibits both wnt and fgf signaling through the regulation of protein maturation and cell surface transportation of their receptors within the endoplasmic reticulum. The protein is Protein shisa-2 (shisa2) of Xenopus laevis (African clawed frog).